The sequence spans 435 residues: Glutamyl-tRNA reductase (435 aa).

Residues 50–53 (TCNR), S110, 115–117 (ESQ), and Q121 each bind substrate. C51 acts as the Nucleophile in catalysis. 191–196 (GAGDMG) lines the NADP(+) pocket.

Belongs to the glutamyl-tRNA reductase family. As to quaternary structure, homodimer.

It catalyses the reaction (S)-4-amino-5-oxopentanoate + tRNA(Glu) + NADP(+) = L-glutamyl-tRNA(Glu) + NADPH + H(+). The protein operates within porphyrin-containing compound metabolism; protoporphyrin-IX biosynthesis; 5-aminolevulinate from L-glutamyl-tRNA(Glu): step 1/2. Functionally, catalyzes the NADPH-dependent reduction of glutamyl-tRNA(Glu) to glutamate 1-semialdehyde (GSA). This Sulfurovum sp. (strain NBC37-1) protein is Glutamyl-tRNA reductase.